The primary structure comprises 787 residues: Lon protease (787 aa).

Residues 12–210 (LPLIPLRGLA…LIYSILLEEI (199 aa)) form the Lon N-terminal domain. An ATP-binding site is contributed by 362-369 (GPPGTGKT). The 182-residue stretch at 599–780 (NPQIGLVNGL…DEVLEQALLK (182 aa)) folds into the Lon proteolytic domain. Residues serine 686 and lysine 729 contribute to the active site.

This sequence belongs to the peptidase S16 family. As to quaternary structure, homohexamer. Organized in a ring with a central cavity.

Its subcellular location is the cytoplasm. It catalyses the reaction Hydrolysis of proteins in presence of ATP.. Functionally, ATP-dependent serine protease that mediates the selective degradation of mutant and abnormal proteins as well as certain short-lived regulatory proteins. Required for cellular homeostasis and for survival from DNA damage and developmental changes induced by stress. Degrades polypeptides processively to yield small peptide fragments that are 5 to 10 amino acids long. Binds to DNA in a double-stranded, site-specific manner. In Clostridioides difficile (strain 630) (Peptoclostridium difficile), this protein is Lon protease.